Reading from the N-terminus, the 138-residue chain is Large ribosomal subunit protein uL16 (138 aa).

The span at 1 to 13 (MLQPKRRKYRKEQ) shows a compositional bias: basic residues. The interval 1–24 (MLQPKRRKYRKEQKGRNTGKATRG) is disordered.

The protein belongs to the universal ribosomal protein uL16 family. In terms of assembly, part of the 50S ribosomal subunit.

Binds 23S rRNA and is also seen to make contacts with the A and possibly P site tRNAs. The chain is Large ribosomal subunit protein uL16 from Burkholderia multivorans (strain ATCC 17616 / 249).